A 278-amino-acid chain; its full sequence is 2,5-diketo-D-gluconic acid reductase A (278 aa).

Catalysis depends on tyrosine 50, which acts as the Proton donor. Histidine 108 lines the substrate pocket. 188 to 242 (GPLGQGKYDLFGAEPVTAAAAAHGKTPAQAVLRWHLQKGFVVFPKSVRRERLEEN) provides a ligand contact to NADP(+). A disordered region spans residues 259–278 (DAMDPGDGSGRVSAHPDEVD).

It belongs to the aldo/keto reductase family. Monomer.

It localises to the cytoplasm. The catalysed reaction is 2-dehydro-L-idonate + NADP(+) = 2,5-didehydro-D-gluconate + NADPH + H(+). Its activity is regulated as follows. Inhibited by Zn(2+), Fe(3+), Cu(2+) and Ni(2+). Catalyzes the reduction of 2,5-diketo-D-gluconic acid (25DKG) to 2-keto-L-gulonic acid (2KLG). 5-keto-D-fructose and dihydroxyacetone can also serve as substrates. 25DKGR-A exhibits a greater selectivity for the substrate and higher thermal stability than 25DKGR-B. The protein is 2,5-diketo-D-gluconic acid reductase A (dkgA) of Corynebacterium sp. (strain ATCC 31090).